Reading from the N-terminus, the 487-residue chain is Cysteine--tRNA ligase (487 aa).

Cys-29 contributes to the Zn(2+) binding site. A 'HIGH' region motif is present at residues 31-41 (VTVYDVNHVGH). Zn(2+) contacts are provided by Cys-209, His-234, and Glu-238. The short motif at 266–270 (KMSKS) is the 'KMSKS' region element. An ATP-binding site is contributed by Lys-269.

The protein belongs to the class-I aminoacyl-tRNA synthetase family. Monomer. Requires Zn(2+) as cofactor.

It localises to the cytoplasm. The enzyme catalyses tRNA(Cys) + L-cysteine + ATP = L-cysteinyl-tRNA(Cys) + AMP + diphosphate. The sequence is that of Cysteine--tRNA ligase from Persephonella marina (strain DSM 14350 / EX-H1).